A 217-amino-acid chain; its full sequence is Cytidylate kinase (217 aa).

Position 21–29 (21–29 (GPAASGKGT)) interacts with ATP.

Belongs to the cytidylate kinase family. Type 1 subfamily.

Its subcellular location is the cytoplasm. The catalysed reaction is CMP + ATP = CDP + ADP. It catalyses the reaction dCMP + ATP = dCDP + ADP. The protein is Cytidylate kinase of Rickettsia bellii (strain OSU 85-389).